The primary structure comprises 141 residues: uncharacterized protein (141 aa).

The Ferritin-like diiron domain occupies 13–141 (VTKGTELEKE…LKGILDRYFK (129 aa)). Fe cation contacts are provided by glutamate 63, histidine 66, glutamate 125, and histidine 128.

This is an uncharacterized protein from Methanocaldococcus jannaschii (strain ATCC 43067 / DSM 2661 / JAL-1 / JCM 10045 / NBRC 100440) (Methanococcus jannaschii).